Here is a 161-residue protein sequence, read N- to C-terminus: tRNA-acetylating toxin 1 (161 aa).

Acetyl-CoA-binding residues include L92, V94, H99, G100, G102, G104, A105, L132, and E135. Y140 is a catalytic residue. Residue H142 participates in acetyl-CoA binding.

Belongs to the acetyltransferase family. GNAT subfamily. As to quaternary structure, homodimer (in absence of antitoxin). Forms a complex with cognate antitoxin TacA1. Forms a 4:2 antitoxin:toxin complex with cognate antitoxin TacA1.

It carries out the reaction glycyl-tRNA(Gly) + acetyl-CoA = N-acetylglycyl-tRNA(Gly) + CoA + H(+). Functionally, toxic component of a type II toxin-antitoxin (TA) system. Acetylates tRNA and inhibits translation, does not acetylate uncharged tRNA. Upon expression in situ acetylates only Gly-tRNA(Gly). In vitro acetylates mainly Gly and Ile/Leu. Upon induction of the toxin gene in lag phase in rich medium (but not mid-exponential phase) the lag phase is extended by several hours, locking bacteria in a non-growth state. Neutralized only by cognate antitoxin TacA1 (A8), but not by TacA2 or TacA3. Its toxic effect is neutralized by expression of peptidyl-tRNA hydrolase (pth) in lag phase. NAD-dependent protein deacylase (cobB) also play a role in detoxifying TacT targets. Expression increases persister cell formation, which is also abolished by either cognate antitoxin or Pth expression. Plays a role in persister cell formation. In terms of biological role, the TacA1-TacT1 complex binds (and probably represses) its own promoter DNA but not that of tacA3-tacT3, it does not repress the tacA3-tacT3 promoter. In Salmonella typhimurium (strain 14028s / SGSC 2262), this protein is tRNA-acetylating toxin 1.